A 136-amino-acid chain; its full sequence is Large ribosomal subunit protein uL16c (136 aa).

This sequence belongs to the universal ribosomal protein uL16 family. Part of the 50S ribosomal subunit.

It is found in the plastid. The protein localises to the chloroplast. The sequence is that of Large ribosomal subunit protein uL16c from Guizotia abyssinica (Niger).